A 623-amino-acid polypeptide reads, in one-letter code: V-type proton ATPase catalytic subunit A (623 aa).

252-259 contributes to the ATP binding site; that stretch reads GAFGCGKT.

It belongs to the ATPase alpha/beta chains family. As to quaternary structure, V-ATPase is a heteromultimeric enzyme composed of a peripheral catalytic V1 complex (components A to H) attached to an integral membrane V0 proton pore complex (components: a, c, c'', d and e). Binds to the deubiquitinating enzyme AMSH3.

The protein resides in the vacuole membrane. The catalysed reaction is ATP + H2O + 4 H(+)(in) = ADP + phosphate + 5 H(+)(out). Functionally, catalytic subunit of the peripheral V1 complex of vacuolar ATPase. V-ATPase vacuolar ATPase is responsible for acidifying a variety of intracellular compartments in eukaryotic cells. The sequence is that of V-type proton ATPase catalytic subunit A (VHA-A) from Arabidopsis thaliana (Mouse-ear cress).